The chain runs to 442 residues: Adenylosuccinate synthetase (442 aa).

GTP is bound by residues 30-36 and 58-60; these read GDEGKGK and GHT. The active-site Proton acceptor is D31. D31 and G58 together coordinate Mg(2+). Residues 31–34, 56–59, T148, R162, N241, T256, and R320 each bind IMP; these read DEGK and NAGH. The Proton donor role is filled by H59. Substrate is bound at residue 316–322; that stretch reads TTTGRRR. Residues R322, 348–350, and 430–432 contribute to the GTP site; these read KLD and GVG.

This sequence belongs to the adenylosuccinate synthetase family. Homodimer. Mg(2+) serves as cofactor.

Its subcellular location is the cytoplasm. The catalysed reaction is IMP + L-aspartate + GTP = N(6)-(1,2-dicarboxyethyl)-AMP + GDP + phosphate + 2 H(+). Its pathway is purine metabolism; AMP biosynthesis via de novo pathway; AMP from IMP: step 1/2. Plays an important role in the de novo pathway and in the salvage pathway of purine nucleotide biosynthesis. Catalyzes the first committed step in the biosynthesis of AMP from IMP. This is Adenylosuccinate synthetase from Trichoplax adhaerens (Trichoplax reptans).